Here is a 505-residue protein sequence, read N- to C-terminus: Maturase K (505 aa).

This sequence belongs to the intron maturase 2 family. MatK subfamily.

Its subcellular location is the plastid. It localises to the chloroplast. Functionally, usually encoded in the trnK tRNA gene intron. Probably assists in splicing its own and other chloroplast group II introns. The protein is Maturase K of Rosa stellata (Star rose).